Consider the following 332-residue polypeptide: tRNA uridine(34) hydroxylase (332 aa).

The 95-residue stretch at 127–221 (SDPETVLIDT…YLEEVPKEKS (95 aa)) folds into the Rhodanese domain. The Cysteine persulfide intermediate role is filled by Cys-181. Residues 308 to 332 (AKKLAQLNKQKKQQAKEAARKKAQQ) are disordered. Residues 321 to 332 (QAKEAARKKAQQ) show a composition bias toward basic and acidic residues.

The protein belongs to the TrhO family.

It catalyses the reaction uridine(34) in tRNA + AH2 + O2 = 5-hydroxyuridine(34) in tRNA + A + H2O. In terms of biological role, catalyzes oxygen-dependent 5-hydroxyuridine (ho5U) modification at position 34 in tRNAs. In Francisella tularensis subsp. tularensis (strain FSC 198), this protein is tRNA uridine(34) hydroxylase.